The chain runs to 2473 residues: Reducing polyketide synthase grgA (2473 aa).

One can recognise a Ketosynthase family 3 (KS3) domain in the interval 15-446 (REPIAIVGSS…GTNAHAIIES (432 aa)). Catalysis depends on for beta-ketoacyl synthase activity residues cysteine 188, histidine 327, and histidine 366. A Malonyl-CoA:ACP transacylase (MAT) domain is found at 559–882 (IFTGQGAQWA…SGVLKRGQNA (324 aa)). Residues 956–1099 (HELLGHSVTH…GGVRLWLGEP (144 aa)) form an N-terminal hotdog fold region. Positions 956–1260 (HELLGHSVTH…IHLSAVGQRR (305 aa)) are dehydratase (DH) domain. In terms of domain architecture, PKS/mFAS DH spans 956 to 1262 (HELLGHSVTH…LSAVGQRRDP (307 aa)). The active-site Proton acceptor; for dehydratase activity is the histidine 990. The C-terminal hotdog fold stretch occupies residues 1114 to 1262 (MEALDMEQLY…LSAVGQRRDP (149 aa)). Catalysis depends on aspartate 1172, which acts as the Proton donor; for dehydratase activity. The segment at 1300–1606 (TAYFYLRQLR…PSFCSVIVAQ (307 aa)) is methyltransfrase (MT) domain. Positions 2108 to 2281 (TYLLCGMTGD…AGSVIHIAIL (174 aa)) constitute a Ketoreductase (KR) domain. The Carrier domain maps to 2388–2473 (AECLVILESC…LVEWRRLNKS (86 aa)). The residue at position 2426 (serine 2426) is an O-(pantetheine 4'-phosphoryl)serine.

Pantetheine 4'-phosphate serves as cofactor.

Its pathway is secondary metabolite biosynthesis. Reducing polyketide synthase; part of the gene cluster that mediates the biosynthesis of gregatin A, a fungal polyketide featuring an alkylated furanone core. The PKS grgA synthesizes C11 and C4 polyketide chains in the presence and absence of the trans-enoyl reductase grgB, respectively. The polyketide transferase grgF is then responsible for the fusion of the two carbon chains to produce the furanone skeleton of gregatin A. Next, the cytochrome P450 monooxygenase grgG accepts performs the oxidative cyclization to furnish the gregatin scaffold and leads to the formation of desmethylgregatin A. Finally, the O-methyltransferase grgD methylates the carboxyl group of desmethylgregatin A to provide gregatin A. This is Reducing polyketide synthase grgA from Penicillium sp.